Consider the following 123-residue polypeptide: Class II hydrophobin 2 (123 aa).

The N-terminal stretch at 1-16 is a signal peptide; sequence MRSFLVIATLAVGAFG. 4 disulfides stabilise this stretch: cysteine 22-cysteine 70, cysteine 32-cysteine 61, cysteine 33-cysteine 45, and cysteine 71-cysteine 82.

The protein belongs to the cerato-ulmin hydrophobin family. Homodimer. Homodimers further self-assemble to form highly ordered films at water-air interfaces through intermolecular interactions.

It localises to the secreted. The protein resides in the cell wall. In terms of biological role, aerial growth, conidiation, and dispersal of filamentous fungi in the environment rely upon a capability of their secreting small amphipathic proteins called hydrophobins (HPBs) with low sequence identity. Class I can self-assemble into an outermost layer of rodlet bundles on aerial cell surfaces, conferring cellular hydrophobicity that supports fungal growth, development and dispersal; whereas Class II form highly ordered films at water-air interfaces through intermolecular interactions but contribute nothing to the rodlet structure. Hyd2 is a class II hydrophobin that plays probably a role in intraspecific signaling or hyphal fusion. Not necessary for root adhesion and colonization. Might play an essential role since no deletion mutants could be obtained. This chain is Class II hydrophobin 2, found in Bionectria ochroleuca (Gliocladium roseum).